A 143-amino-acid polypeptide reads, in one-letter code: Large ribosomal subunit protein uL11 (143 aa).

Belongs to the universal ribosomal protein uL11 family. As to quaternary structure, part of the ribosomal stalk of the 50S ribosomal subunit. Interacts with L10 and the large rRNA to form the base of the stalk. L10 forms an elongated spine to which L12 dimers bind in a sequential fashion forming a multimeric L10(L12)X complex. One or more lysine residues are methylated.

Forms part of the ribosomal stalk which helps the ribosome interact with GTP-bound translation factors. The chain is Large ribosomal subunit protein uL11 from Halorhodospira halophila (strain DSM 244 / SL1) (Ectothiorhodospira halophila (strain DSM 244 / SL1)).